The following is a 188-amino-acid chain: HTH-type transcriptional repressor AcnR (188 aa).

One can recognise an HTH tetR-type domain in the interval 10-70 (TNSRQEILEG…ALAREDAARM (61 aa)). The H-T-H motif DNA-binding region spans 33-52 (TVRRLEEATGKSRGAIFHHF). Residues 79–80 (LV), R130, and N134 contribute to the citrate site. Mg(2+) is bound at residue E181. R185 is a binding site for citrate.

As to quaternary structure, homodimer.

AcnR negatively controls the expression of the aconitase gene acn. Binds to the imperfect inverted repeat in the acn promoter region. In Corynebacterium glutamicum (strain ATCC 13032 / DSM 20300 / JCM 1318 / BCRC 11384 / CCUG 27702 / LMG 3730 / NBRC 12168 / NCIMB 10025 / NRRL B-2784 / 534), this protein is HTH-type transcriptional repressor AcnR.